A 215-amino-acid chain; its full sequence is Ion-translocating oxidoreductase complex subunit G (215 aa).

The helical transmembrane segment at 9–29 (GLILSLFAIITSGLIALTYFG) threads the bilayer. Position 176 is an FMN phosphoryl threonine (Thr176).

This sequence belongs to the RnfG family. In terms of assembly, the complex is composed of six subunits: RnfA, RnfB, RnfC, RnfD, RnfE and RnfG. FMN is required as a cofactor.

It is found in the cell inner membrane. Its function is as follows. Part of a membrane-bound complex that couples electron transfer with translocation of ions across the membrane. The sequence is that of Ion-translocating oxidoreductase complex subunit G from Pseudoalteromonas atlantica (strain T6c / ATCC BAA-1087).